A 394-amino-acid chain; its full sequence is Putative 8-amino-7-oxononanoate synthase (394 aa).

R30 contributes to the substrate binding site. Pyridoxal 5'-phosphate is bound at residue 117-118 (GY). A substrate-binding site is contributed by H142. Residues S190, 215 to 218 (DEAH), and 246 to 249 (TLSK) contribute to the pyridoxal 5'-phosphate site. Position 249 is an N6-(pyridoxal phosphate)lysine (K249). Position 364 (T364) interacts with substrate.

Belongs to the class-II pyridoxal-phosphate-dependent aminotransferase family. BioF subfamily. In terms of assembly, homodimer. Pyridoxal 5'-phosphate serves as cofactor.

The enzyme catalyses 6-carboxyhexanoyl-[ACP] + L-alanine + H(+) = (8S)-8-amino-7-oxononanoate + holo-[ACP] + CO2. The protein operates within cofactor biosynthesis; biotin biosynthesis. Functionally, catalyzes the decarboxylative condensation of pimeloyl-[acyl-carrier protein] and L-alanine to produce 8-amino-7-oxononanoate (AON), [acyl-carrier protein], and carbon dioxide. In Nostoc punctiforme (strain ATCC 29133 / PCC 73102), this protein is Putative 8-amino-7-oxononanoate synthase (bioF).